A 680-amino-acid polypeptide reads, in one-letter code: DNA ligase (680 aa).

Residues 38 to 42 (DAEYD), 87 to 88 (SL), and Glu-119 each bind NAD(+). Catalysis depends on Lys-121, which acts as the N6-AMP-lysine intermediate. Residues Arg-142, Glu-179, Lys-296, and Lys-320 each contribute to the NAD(+) site. Cys-414, Cys-417, Cys-432, and Cys-438 together coordinate Zn(2+). Residues 597–680 (IEDLPLKGLT…DLLRKHGRLE (84 aa)) enclose the BRCT domain.

Belongs to the NAD-dependent DNA ligase family. LigA subfamily. Requires Mg(2+) as cofactor. The cofactor is Mn(2+).

It catalyses the reaction NAD(+) + (deoxyribonucleotide)n-3'-hydroxyl + 5'-phospho-(deoxyribonucleotide)m = (deoxyribonucleotide)n+m + AMP + beta-nicotinamide D-nucleotide.. Functionally, DNA ligase that catalyzes the formation of phosphodiester linkages between 5'-phosphoryl and 3'-hydroxyl groups in double-stranded DNA using NAD as a coenzyme and as the energy source for the reaction. It is essential for DNA replication and repair of damaged DNA. In Cellvibrio japonicus (strain Ueda107) (Pseudomonas fluorescens subsp. cellulosa), this protein is DNA ligase.